The sequence spans 64 residues: Beta-toxin Tf1 (64 aa).

One can recognise an LCN-type CS-alpha/beta domain in the interval 1–62 (KEGYLMDHEG…VWERATNRCG (62 aa)). 4 disulfide bridges follow: C11-C61, C15-C37, C23-C42, and C27-C44. C61 carries the cysteine amide modification.

Belongs to the long (4 C-C) scorpion toxin superfamily. Sodium channel inhibitor family. Beta subfamily. In terms of tissue distribution, expressed by the venom gland.

It is found in the secreted. Beta toxins bind voltage-independently at site-4 of sodium channels (Nav) and shift the voltage of activation toward more negative potentials thereby affecting sodium channel activation and promoting spontaneous and repetitive firing. The chain is Beta-toxin Tf1 from Tityus fasciolatus (Central Brazilian scorpion).